The following is a 458-amino-acid chain: tRNA-2-methylthio-N(6)-dimethylallyladenosine synthase (458 aa).

Residues 15–134 (KKVFIKTYGC…LPELLEKAKQ (120 aa)) enclose the MTTase N-terminal domain. The [4Fe-4S] cluster site is built by C24, C60, C97, C175, C179, and C182. A Radical SAM core domain is found at 161–395 (RKRGVSAFLT…LLLEQQNTFL (235 aa)). The region spanning 396–457 (RSKIGQKTDV…SNSFVGEMTN (62 aa)) is the TRAM domain.

This sequence belongs to the methylthiotransferase family. MiaB subfamily. Monomer. [4Fe-4S] cluster serves as cofactor.

The protein localises to the cytoplasm. It catalyses the reaction N(6)-dimethylallyladenosine(37) in tRNA + (sulfur carrier)-SH + AH2 + 2 S-adenosyl-L-methionine = 2-methylsulfanyl-N(6)-dimethylallyladenosine(37) in tRNA + (sulfur carrier)-H + 5'-deoxyadenosine + L-methionine + A + S-adenosyl-L-homocysteine + 2 H(+). Functionally, catalyzes the methylthiolation of N6-(dimethylallyl)adenosine (i(6)A), leading to the formation of 2-methylthio-N6-(dimethylallyl)adenosine (ms(2)i(6)A) at position 37 in tRNAs that read codons beginning with uridine. The protein is tRNA-2-methylthio-N(6)-dimethylallyladenosine synthase of Bartonella tribocorum (strain CIP 105476 / IBS 506).